The chain runs to 272 residues: GEM-like protein 5 (272 aa).

The tract at residues 1-42 (MTGSQEDQPKIIIDQEQPKTLETEHQPEPSSSSPDQKKWGTH) is disordered. The segment covering 16-27 (EQPKTLETEHQP) has biased composition (basic and acidic residues). In terms of domain architecture, GRAM spans 143 to 221 (SLFRQIFGTE…ANVATVNPVV (79 aa)).

The protein belongs to the GEM family.

In Arabidopsis thaliana (Mouse-ear cress), this protein is GEM-like protein 5.